We begin with the raw amino-acid sequence, 180 residues long: NADH-quinone oxidoreductase subunit B (180 aa).

Positions 59, 60, 124, and 154 each coordinate [4Fe-4S] cluster.

The protein belongs to the complex I 20 kDa subunit family. NDH-1 is composed of 14 different subunits. Subunits NuoB, C, D, E, F, and G constitute the peripheral sector of the complex. [4Fe-4S] cluster serves as cofactor.

The protein resides in the cell inner membrane. It catalyses the reaction a quinone + NADH + 5 H(+)(in) = a quinol + NAD(+) + 4 H(+)(out). Functionally, NDH-1 shuttles electrons from NADH, via FMN and iron-sulfur (Fe-S) centers, to quinones in the respiratory chain. The immediate electron acceptor for the enzyme in this species is believed to be ubiquinone. Couples the redox reaction to proton translocation (for every two electrons transferred, four hydrogen ions are translocated across the cytoplasmic membrane), and thus conserves the redox energy in a proton gradient. This is NADH-quinone oxidoreductase subunit B from Beijerinckia indica subsp. indica (strain ATCC 9039 / DSM 1715 / NCIMB 8712).